A 159-amino-acid chain; its full sequence is Ribosomal RNA large subunit methyltransferase H (159 aa).

Residues Leu-76 and Gly-108 each coordinate S-adenosyl-L-methionine.

It belongs to the RNA methyltransferase RlmH family. Homodimer.

The protein localises to the cytoplasm. The enzyme catalyses pseudouridine(1915) in 23S rRNA + S-adenosyl-L-methionine = N(3)-methylpseudouridine(1915) in 23S rRNA + S-adenosyl-L-homocysteine + H(+). In terms of biological role, specifically methylates the pseudouridine at position 1915 (m3Psi1915) in 23S rRNA. This chain is Ribosomal RNA large subunit methyltransferase H, found in Ligilactobacillus salivarius (strain UCC118) (Lactobacillus salivarius).